The following is a 330-amino-acid chain: Phenylalanine--tRNA ligase alpha subunit (330 aa).

Position 254 (glutamate 254) interacts with Mg(2+).

It belongs to the class-II aminoacyl-tRNA synthetase family. Phe-tRNA synthetase alpha subunit type 1 subfamily. As to quaternary structure, tetramer of two alpha and two beta subunits. Mg(2+) is required as a cofactor.

The protein localises to the cytoplasm. It catalyses the reaction tRNA(Phe) + L-phenylalanine + ATP = L-phenylalanyl-tRNA(Phe) + AMP + diphosphate + H(+). This is Phenylalanine--tRNA ligase alpha subunit (pheS) from Neisseria meningitidis serogroup B (strain ATCC BAA-335 / MC58).